A 622-amino-acid chain; its full sequence is Lamin Dm0 (622 aa).

The interval 1-50 is disordered; the sequence is MSSKSRRAGTATPQPGNTSTPRPPSAGPQPPPPSTHSQTASSPLSPTRHS. An N-acetylserine modification is found at Ser2. Residues 2–56 form a head region; that stretch reads SSKSRRAGTATPQPGNTSTPRPPSAGPQPPPPSTHSQTASSPLSPTRHSRVAEKV. Residues Thr10, Thr12, and Thr20 each carry the phosphothreonine modification. Positions 21–34 are enriched in pro residues; that stretch reads PRPPSAGPQPPPPS. Ser25 and Ser34 each carry phosphoserine. Thr39 carries the phosphothreonine modification. Phosphoserine is present on residues Ser41, Ser42, and Ser45. The residue at position 47 (Thr47) is a Phosphothreonine. One can recognise an IF rod domain in the interval 54-410; sequence EKVELQNLND…KLLVGEEARL (357 aa). Positions 55 to 91 are coil 1A; the sequence is KVELQNLNDRLATYIDRVRNLETENSRLTIEVQTTRD. Residues 92-103 are linker 1; the sequence is TVTRETTNIKNI. Residues 104–241 are coil 1B; the sequence is FEAELLETRR…QIHSQEINES (138 aa). A Phosphoserine modification is found at Ser235. Residues 242–265 are linker 2; sequence RRIKQTEYSEIDGRLSSEYDAKLK. Tyr249 is modified (phosphotyrosine). Ser250 and Ser311 each carry phosphoserine. The tract at residues 266–408 is coil 2; the sequence is QSLQELRAQY…YDKLLVGEEA (143 aa). A tail region spans residues 409-619; sequence RLNITPATNT…GDPQQSNEKC (211 aa). 2 positions are modified to phosphothreonine: Thr413 and Thr435. Polar residues predominate over residues 429-440; the sequence is RNSTRATPSRRT. The segment at 429-448 is disordered; sequence RNSTRATPSRRTPSAAVKRK. A Phosphoserine modification is found at Ser442. The Nuclear localization signal motif lies at 446–451; sequence KRKRAV. Phosphoserine occurs at positions 455 and 459. The region spanning 461–588 is the LTD domain; sequence ADYYVSASAK…RIVSQHTSSS (128 aa). Ser595 is modified (phosphoserine). At Thr597 the chain carries Phosphothreonine. Residues 603–622 are disordered; it reads EQLYHQQGDPQQSNEKCAIM. Polar residues predominate over residues 605 to 622; that stretch reads LYHQQGDPQQSNEKCAIM. At Ser615 the chain carries Phosphoserine. Cysteine methyl ester is present on Cys619. A lipid anchor (S-farnesyl cysteine) is attached at Cys619. The propeptide at 620-622 is removed in mature form; the sequence is AIM.

This sequence belongs to the intermediate filament family. As to quaternary structure, interacts directly with LBR. Interacts with MAN1. Interacts with Ote. Three forms of lamin have been identified in D.melanogaster, lamin Dm0 is rapidly processed to lamin Dm1 in the cytoplasm, Dm1 is then assembled in the nuclear envelope and is then phosphorylated, forming lamin Dm2. Constitutively expressed in all tissues (at protein level). Expressed in spermatocytes (at protein level).

It is found in the nucleus. The protein localises to the nucleus inner membrane. The protein resides in the nucleus envelope. Its subcellular location is the nucleus lamina. It localises to the cytoplasm. It is found in the cytoskeleton. The protein localises to the spindle pole. In terms of biological role, lamins are components of the nuclear lamina, a fibrous layer on the nucleoplasmic side of the inner nuclear membrane, which is thought to provide a framework for the nuclear envelope and may also interact with chromatin. May have a role in the localization of the LEM domain proteins Ote, bocks and MAN1 to the nuclear membrane. In spermatocytes, plays a role in maintaining type-A lamin LamC nuclear localization; regulates meiotic cytokinesis by maintaining the structure of the spindle envelope, and by contributing to the formation of the contractile ring and central spindle. Required for nuclear migration and to link the microtubule organizing center (MTOC) to the nucleus. In addition, is required for nuclear envelope localization of klar. In Drosophila melanogaster (Fruit fly), this protein is Lamin Dm0.